The chain runs to 84 residues: M-zodatoxin-Lt2a (84 aa).

An N-terminal signal peptide occupies residues 1–22 (MKYFVIALALAVALVCIAESTA). Positions 23 to 58 (YEVNEELENELDDLDDAAWLAVAEELQGLEDFEESR) are excised as a propeptide. The short motif at 55-58 (EESR) is the Processing quadruplet motif element.

Post-translationally, cleavage of the propeptide depends on the processing quadruplet motif (XXXR, with at least one of X being E). As to expression, expressed by the venom gland.

The protein localises to the secreted. Its function is as follows. It has antimicrobial activity against Gram-positive bacteria (A.globiformis VKM Ac-1112 (MIC=0.7 uM), and B.subtilis VKM B-501 (MIC=0.4 uM)), Gram-negative bacteria (E.coli DH5-alpha (MIC=1.0 uM), E.coli MH1 (MIC=0.7 uM), and P.aeruginosa PAO1 (MIC=6.7 uM)), and yeasts (P.pastoris GS115 (MIC=6.7 uM), and S.cerevisiae Y190 (MIC=54 uM)). Also has a strong hemolytic activity against rabbit erythrocytes. Causes paralysis, but is not lethal when injected into insect (M.domestica) larvae. This Lachesana tarabaevi (Spider) protein is M-zodatoxin-Lt2a.